We begin with the raw amino-acid sequence, 541 residues long: Phosphoenolpyruvate carboxykinase (ATP) (541 aa).

Substrate-binding residues include R67, Y207, and K213. ATP is bound by residues K213, H232, and 248-256; that span reads GLSGTGKTT. Mn(2+)-binding residues include K213 and H232. D269 contacts Mn(2+). ATP contacts are provided by residues E297, R333, 449 to 450, and T455; that span reads RI. R333 is a binding site for substrate.

The protein belongs to the phosphoenolpyruvate carboxykinase (ATP) family. Monomer. Requires Mn(2+) as cofactor.

It localises to the cytoplasm. The catalysed reaction is oxaloacetate + ATP = phosphoenolpyruvate + ADP + CO2. It functions in the pathway carbohydrate biosynthesis; gluconeogenesis. Functionally, involved in the gluconeogenesis. Catalyzes the conversion of oxaloacetate (OAA) to phosphoenolpyruvate (PEP) through direct phosphoryl transfer between the nucleoside triphosphate and OAA. The polypeptide is Phosphoenolpyruvate carboxykinase (ATP) (Vibrio atlanticus (strain LGP32) (Vibrio splendidus (strain Mel32))).